The chain runs to 309 residues: Ferrochelatase (309 aa).

His-185 and Glu-264 together coordinate Fe cation.

The protein belongs to the ferrochelatase family.

It localises to the cytoplasm. It catalyses the reaction heme b + 2 H(+) = protoporphyrin IX + Fe(2+). It participates in porphyrin-containing compound metabolism; protoheme biosynthesis; protoheme from protoporphyrin-IX: step 1/1. Catalyzes the ferrous insertion into protoporphyrin IX. The chain is Ferrochelatase from Aquifex aeolicus (strain VF5).